The chain runs to 954 residues: ATPase 9, plasma membrane-type (954 aa).

Topologically, residues 1–66 (MAGNKDSSWD…EKKENKVLKF (66 aa)) are cytoplasmic. The chain crosses the membrane as a helical span at residues 67-86 (LGFMWNPLSWVMELAAIMAI). Over 87–98 (ALANGGGRPPDW) the chain is Extracellular. The chain crosses the membrane as a helical span at residues 99–119 (QDFVGITVLLIINSTISFIEE). The Cytoplasmic portion of the chain corresponds to 120–248 (NNAGNAAAAL…GHFQKVLTAI (129 aa)). The chain crosses the membrane as a helical span at residues 249–269 (GNFCICSIAIGMLIEIVVMYP). Topologically, residues 270–278 (IQKRAYRDG) are extracellular. A helical transmembrane segment spans residues 279–296 (IDNLLVLLIGGIPIAMPT). Residues 297 to 648 (VLSVTMAIGS…TSRAIFQRMK (352 aa)) lie on the Cytoplasmic side of the membrane. The active-site 4-aspartylphosphate intermediate is the D334. Residues D593 and D597 each coordinate Mg(2+). Residues 649-670 (NYTIYAVSITIRIVMGFMLLAL) traverse the membrane as a helical segment. Topologically, residues 671-675 (IWKFD) are extracellular. The helical transmembrane segment at 676-698 (FSPFMVLIVAILNDGTIMTISKD) threads the bilayer. Residues 699 to 714 (RVKPSPLPDSWKLKEI) are Cytoplasmic-facing. A helical membrane pass occupies residues 715-735 (FATGVVLGTYLAVMTVVFFWA). At 736–756 (AESTDFFSAKFGVRSISGNPH) the chain is on the extracellular side. A helical transmembrane segment spans residues 757–777 (ELTAAVYLQVSIVSQALIFVT). Residues 778-789 (RSRSWSYVERPG) are Cytoplasmic-facing. A helical membrane pass occupies residues 790–810 (FWLISAFFMAQLIATLIAVYA). Topologically, residues 811-818 (NWNFARIR) are extracellular. Residues 819–839 (GIGWGWAGVIWLYSIVFYIPL) traverse the membrane as a helical segment. The Cytoplasmic segment spans residues 840–954 (DILKFIIRYS…IEAIQQHYTL (115 aa)). The residue at position 886 (T886) is a Phosphothreonine. Phosphoserine is present on S936. The segment at 952 to 954 (YTL) is interaction with 14-3-3 proteins. A Phosphothreonine modification is found at T953.

The protein belongs to the cation transport ATPase (P-type) (TC 3.A.3) family. Type IIIA subfamily. Binds to 14-3-3 proteins. The binding is induced by phosphorylation of Thr-953. Binding to 14-3-3 proteins activates the H(+)-ATPase. In terms of tissue distribution, anther specific. Expressed in guard cells.

The protein localises to the membrane. The catalysed reaction is ATP + H2O + H(+)(in) = ADP + phosphate + 2 H(+)(out). The plasma membrane H(+) ATPase of plants and fungi generates a proton gradient that drives the active transport of nutrients by H(+)-symport. The resulting external acidification and/or internal alkinization may mediate growth responses. This is ATPase 9, plasma membrane-type (AHA9) from Arabidopsis thaliana (Mouse-ear cress).